Reading from the N-terminus, the 321-residue chain is Carbonic anhydrase, chloroplastic (321 aa).

Residues 1-100 (MSTASINSCL…AAARVDQITA (100 aa)) constitute a chloroplast transit peptide.

This sequence belongs to the beta-class carbonic anhydrase family. As to quaternary structure, homohexamer.

Its subcellular location is the plastid. The protein localises to the chloroplast stroma. It carries out the reaction hydrogencarbonate + H(+) = CO2 + H2O. Functionally, reversible hydration of carbon dioxide. This Nicotiana tabacum (Common tobacco) protein is Carbonic anhydrase, chloroplastic.